A 141-amino-acid polypeptide reads, in one-letter code: Putative pre-16S rRNA nuclease (141 aa).

Belongs to the YqgF nuclease family.

It is found in the cytoplasm. Could be a nuclease involved in processing of the 5'-end of pre-16S rRNA. The protein is Putative pre-16S rRNA nuclease of Sodalis glossinidius (strain morsitans).